The chain runs to 639 residues: Sperm-associated antigen 16 protein (639 aa).

Residues Asp-146 to Glu-218 are a coiled coil. Positions Arg-280–Asp-333 are disordered. 2 stretches are compositionally biased toward basic and acidic residues: residues Glu-281 to Ser-295 and Ser-303 to Glu-325. WD repeat units follow at residues Leu-358–Thr-397, Gly-400–Thr-439, Gly-442–Thr-481, Gly-484–Ser-523, Gly-526–Ser-565, Val-568–Val-608, and Gly-609–Ile-639.

As to quaternary structure, interacts with SPAG6 and STK36. In terms of processing, phosphorylated by TSSK2. Expressed in testis.

The protein resides in the cytoplasm. The protein localises to the cytoskeleton. It localises to the cilium axoneme. It is found in the flagellum axoneme. Its subcellular location is the cell projection. The protein resides in the cilium. The protein localises to the flagellum. Necessary for sperm flagellar function. Plays a role in motile ciliogenesis. May help to recruit STK36 to the cilium or apical surface of the cell to initiate subsequent steps of construction of the central pair apparatus of motile cilia. This chain is Sperm-associated antigen 16 protein (Spag16), found in Mus musculus (Mouse).